The following is a 449-amino-acid chain: Probable mitochondrial chaperone bcs1 (449 aa).

The Mitochondrial intermembrane portion of the chain corresponds to 1-20; that stretch reads MDNIGAADAATSSGISGLLS. The helical transmembrane segment at 21-41 threads the bilayer; it reads GNSFLGAGIGLMGFGAGLAIL. Over 42–449 the chain is Mitochondrial matrix; it reads RRGLISGASL…FNVHRKSLSV (408 aa). An ATP-binding site is contributed by 249 to 256; the sequence is GPPGSGKT.

Belongs to the AAA ATPase family. BCS1 subfamily.

The protein localises to the mitochondrion inner membrane. It carries out the reaction ATP + H2O = ADP + phosphate + H(+). Functionally, chaperone necessary for the incorporation of Rieske iron-sulfur protein rip1 into the mitochondrial respiratory chain complex III. The chain is Probable mitochondrial chaperone bcs1 from Schizosaccharomyces pombe (strain 972 / ATCC 24843) (Fission yeast).